We begin with the raw amino-acid sequence, 325 residues long: Elongation factor P--(R)-beta-lysine ligase (325 aa).

76-78 is a substrate binding site; the sequence is SPE. Residues 100–102 and asparagine 109 each bind ATP; that span reads RNE. Tyrosine 118 contacts substrate. 244–245 serves as a coordination point for ATP; that stretch reads EL. A substrate-binding site is contributed by glutamate 251. Position 300 (glycine 300) interacts with ATP.

This sequence belongs to the class-II aminoacyl-tRNA synthetase family. EpmA subfamily. Homodimer.

The enzyme catalyses D-beta-lysine + L-lysyl-[protein] + ATP = N(6)-((3R)-3,6-diaminohexanoyl)-L-lysyl-[protein] + AMP + diphosphate + H(+). Functionally, with EpmB is involved in the beta-lysylation step of the post-translational modification of translation elongation factor P (EF-P). Catalyzes the ATP-dependent activation of (R)-beta-lysine produced by EpmB, forming a lysyl-adenylate, from which the beta-lysyl moiety is then transferred to the epsilon-amino group of a conserved specific lysine residue in EF-P. In Sodalis glossinidius (strain morsitans), this protein is Elongation factor P--(R)-beta-lysine ligase.